The sequence spans 479 residues: 3-isopropylmalate dehydratase large subunit (479 aa).

[4Fe-4S] cluster is bound by residues Cys353, Cys414, and Cys417.

It belongs to the aconitase/IPM isomerase family. LeuC type 1 subfamily. As to quaternary structure, heterodimer of LeuC and LeuD. It depends on [4Fe-4S] cluster as a cofactor.

It carries out the reaction (2R,3S)-3-isopropylmalate = (2S)-2-isopropylmalate. Its pathway is amino-acid biosynthesis; L-leucine biosynthesis; L-leucine from 3-methyl-2-oxobutanoate: step 2/4. Its function is as follows. Catalyzes the isomerization between 2-isopropylmalate and 3-isopropylmalate, via the formation of 2-isopropylmaleate. This Xanthomonas campestris pv. campestris (strain 8004) protein is 3-isopropylmalate dehydratase large subunit.